A 195-amino-acid polypeptide reads, in one-letter code: UPF0316 protein Pcar_2434 (195 aa).

The next 3 helical transmembrane spans lie at 13–33 (LFLLPLLVFFARIIDVSIGTL), 45–65 (WAGVLGFFESLIWVLAISQVM), and 71–91 (VWTYIAFALGFATGNYVGVLI).

Belongs to the UPF0316 family.

Its subcellular location is the cell membrane. The protein is UPF0316 protein Pcar_2434 of Syntrophotalea carbinolica (strain DSM 2380 / NBRC 103641 / GraBd1) (Pelobacter carbinolicus).